A 226-amino-acid chain; its full sequence is Ribonuclease 3 (226 aa).

Positions 7–129 constitute an RNase III domain; that stretch reads LPRLCRTLGY…IIGAVYLDSD (123 aa). Glu42 is a Mg(2+) binding site. The active site involves Asp46. Mg(2+) contacts are provided by Asp115 and Glu118. Residue Glu118 is part of the active site. Positions 156 to 226 constitute a DRBM domain; it reads DAKTLLQEHL…AAQVLELLKK (71 aa).

Belongs to the ribonuclease III family. In terms of assembly, homodimer. Requires Mg(2+) as cofactor.

It localises to the cytoplasm. The enzyme catalyses Endonucleolytic cleavage to 5'-phosphomonoester.. Digests double-stranded RNA. Involved in the processing of primary rRNA transcript to yield the immediate precursors to the large and small rRNAs (23S and 16S). Processes some mRNAs, and tRNAs when they are encoded in the rRNA operon. Processes pre-crRNA and tracrRNA of type II CRISPR loci if present in the organism. The polypeptide is Ribonuclease 3 (Shewanella baltica (strain OS185)).